Consider the following 244-residue polypeptide: Haloacid dehalogenase-like hydrolase domain-containing protein Sgpp (244 aa).

Residue Asp28 is the Nucleophile of the active site. The Mg(2+) site is built by Asp28, Asp30, and Asp189. The Proton donor role is filled by Asp30.

The protein belongs to the HAD-like hydrolase superfamily. DOG/GPP family. Mg(2+) serves as cofactor. As to expression, ubiquitous with highest expression in flowers.

Functionally, acts as a phosphosugar phosphatase on a broad range of sugar phosphate substrates with preferential activity on D-ribose-5-phosphate, 2-deoxy-D-ribose-5-phosphate, 2-deoxy-D-glucose-6-phosphate, and D-mannose-6-phosphate and with a lower activity on D-fructose-1-phosphate, D-glucose-6-phosphate, DL-glycerol-3-phosphate, and D-fructose-6-phosphate. This chain is Haloacid dehalogenase-like hydrolase domain-containing protein Sgpp (SGPP), found in Arabidopsis thaliana (Mouse-ear cress).